We begin with the raw amino-acid sequence, 390 residues long: 3-ketoacyl-CoA thiolase (390 aa).

C95 (acyl-thioester intermediate) is an active-site residue. Active-site proton acceptor residues include H346 and C376.

It belongs to the thiolase-like superfamily. Thiolase family. As to quaternary structure, heterotetramer of two alpha chains (FadB) and two beta chains (FadA).

Its subcellular location is the cytoplasm. The catalysed reaction is an acyl-CoA + acetyl-CoA = a 3-oxoacyl-CoA + CoA. It functions in the pathway lipid metabolism; fatty acid beta-oxidation. In terms of biological role, catalyzes the final step of fatty acid oxidation in which acetyl-CoA is released and the CoA ester of a fatty acid two carbons shorter is formed. In Acinetobacter baylyi (strain ATCC 33305 / BD413 / ADP1), this protein is 3-ketoacyl-CoA thiolase.